Here is a 533-residue protein sequence, read N- to C-terminus: MDTGLCAPLRGLSGLLLLLCALPWAEGGKVLVFPMEGSHWLSMRDVVRELHARGHQAVVLAPEVTVHMKGEDFFTLQTYAFPYTKEEYQREILGNAKKGFEPQHFVKTFFETMASIKKFFDLYANSCAALLHNKTLIQQLNSSSFDVVLTDPVFPCGALLAKYLQIPAVFFLRSVPCGIDYEATQCPKPSSYIPNLLTMLSDHMTFLQRVKNMLYPLTLKYICHLSITPYESLASELLQREMSLVEVLSHASVWLFRGDFVFDYPRPIMPNMVFIGGINCVIKKPLSQEFEAYVNASGEHGIVVFSLGSMVSEIPEKKAMEIAEALGRIPQTLLWRYTGTRPSNLAKNTILVKWLPQNDLLGHPKARAFITHSGSHGIYEGICNGVPMVMMPLFGDQMDNAKRMETRGAGVTLNVLEMTADDLENALKTVINNKSYKENIMRLSSLHKDRPIEPLDLAVFWVEYVMRHKGAPHLRPAAHDLTWYQYHSLDVIGFLLAIVLTVVFIVYKSCAYGCRKCFGGKGRVKKSHKSKTH.

The first 27 residues, 1-27, serve as a signal peptide directing secretion; it reads MDTGLCAPLRGLSGLLLLLCALPWAEG. N-linked (GlcNAc...) asparagine glycosylation is found at asparagine 133, asparagine 141, asparagine 295, and asparagine 433. Residues 491-507 traverse the membrane as a helical segment; it reads VIGFLLAIVLTVVFIVY.

This sequence belongs to the UDP-glycosyltransferase family.

It localises to the microsome. Its subcellular location is the endoplasmic reticulum membrane. It catalyses the reaction glucuronate acceptor + UDP-alpha-D-glucuronate = acceptor beta-D-glucuronoside + UDP + H(+). UDPGT is of major importance in the conjugation and subsequent elimination of potentially toxic xenobiotics and endogenous compounds. In Rattus norvegicus (Rat), this protein is UDP-glucuronosyltransferase 1-2 (Ugt1a2).